A 240-amino-acid polypeptide reads, in one-letter code: Probable 2-phosphosulfolactate phosphatase (240 aa).

Belongs to the ComB family. Mg(2+) serves as cofactor.

It carries out the reaction (2R)-O-phospho-3-sulfolactate + H2O = (2R)-3-sulfolactate + phosphate. The chain is Probable 2-phosphosulfolactate phosphatase from Clostridium kluyveri (strain NBRC 12016).